The primary structure comprises 377 residues: Cobalt-precorrin-5B C(1)-methyltransferase (377 aa).

This sequence belongs to the CbiD family.

The catalysed reaction is Co-precorrin-5B + S-adenosyl-L-methionine = Co-precorrin-6A + S-adenosyl-L-homocysteine. The protein operates within cofactor biosynthesis; adenosylcobalamin biosynthesis; cob(II)yrinate a,c-diamide from sirohydrochlorin (anaerobic route): step 6/10. In terms of biological role, catalyzes the methylation of C-1 in cobalt-precorrin-5B to form cobalt-precorrin-6A. This Alkaliphilus metalliredigens (strain QYMF) protein is Cobalt-precorrin-5B C(1)-methyltransferase.